The following is a 103-amino-acid chain: Large ribosomal subunit protein uL24 (103 aa).

The protein belongs to the universal ribosomal protein uL24 family. As to quaternary structure, part of the 50S ribosomal subunit.

In terms of biological role, one of two assembly initiator proteins, it binds directly to the 5'-end of the 23S rRNA, where it nucleates assembly of the 50S subunit. Functionally, one of the proteins that surrounds the polypeptide exit tunnel on the outside of the subunit. The protein is Large ribosomal subunit protein uL24 of Brucella ovis (strain ATCC 25840 / 63/290 / NCTC 10512).